We begin with the raw amino-acid sequence, 282 residues long: ATP phosphoribosyltransferase (282 aa).

The protein belongs to the ATP phosphoribosyltransferase family. Long subfamily. The cofactor is Mg(2+).

The protein localises to the cytoplasm. It catalyses the reaction 1-(5-phospho-beta-D-ribosyl)-ATP + diphosphate = 5-phospho-alpha-D-ribose 1-diphosphate + ATP. The protein operates within amino-acid biosynthesis; L-histidine biosynthesis; L-histidine from 5-phospho-alpha-D-ribose 1-diphosphate: step 1/9. Its activity is regulated as follows. Feedback inhibited by histidine. In terms of biological role, catalyzes the condensation of ATP and 5-phosphoribose 1-diphosphate to form N'-(5'-phosphoribosyl)-ATP (PR-ATP). Has a crucial role in the pathway because the rate of histidine biosynthesis seems to be controlled primarily by regulation of HisG enzymatic activity. The protein is ATP phosphoribosyltransferase of Saccharopolyspora erythraea (strain ATCC 11635 / DSM 40517 / JCM 4748 / NBRC 13426 / NCIMB 8594 / NRRL 2338).